Here is a 587-residue protein sequence, read N- to C-terminus: uncharacterized protein (587 aa).

The 366-residue stretch at 61 to 426 folds into the YcaO domain; the sequence is GKGASKKAAL…DLPNWHHDAE (366 aa).

This is an uncharacterized protein from Haemophilus influenzae (strain ATCC 51907 / DSM 11121 / KW20 / Rd).